Consider the following 192-residue polypeptide: Fe/S biogenesis protein NfuA (192 aa).

[4Fe-4S] cluster contacts are provided by Cys150 and Cys153.

This sequence belongs to the NfuA family. As to quaternary structure, homodimer. [4Fe-4S] cluster serves as cofactor.

Functionally, involved in iron-sulfur cluster biogenesis. Binds a 4Fe-4S cluster, can transfer this cluster to apoproteins, and thereby intervenes in the maturation of Fe/S proteins. Could also act as a scaffold/chaperone for damaged Fe/S proteins. This chain is Fe/S biogenesis protein NfuA, found in Buchnera aphidicola subsp. Acyrthosiphon pisum (strain 5A).